Reading from the N-terminus, the 932-residue chain is DNA mismatch repair protein MutS (932 aa).

615-622 is an ATP binding site; it reads GPNMAGKS.

It belongs to the DNA mismatch repair MutS family.

Its function is as follows. This protein is involved in the repair of mismatches in DNA. It is possible that it carries out the mismatch recognition step. This protein has a weak ATPase activity. This is DNA mismatch repair protein MutS from Clostridium botulinum (strain Okra / Type B1).